A 727-amino-acid polypeptide reads, in one-letter code: Non-structural protein 4 (727 aa).

Disordered stretches follow at residues M1–G38 and G671–K727. A compositionally biased stretch (polar residues) spans R17–G38. The segment covering S712–K727 has biased composition (basic residues).

The polypeptide is Non-structural protein 4 (Rice dwarf virus (isolate Fujian) (RDV)).